Here is a 347-residue protein sequence, read N- to C-terminus: Histidinol-phosphate aminotransferase (347 aa).

Position 209 is an N6-(pyridoxal phosphate)lysine (Lys-209).

Belongs to the class-II pyridoxal-phosphate-dependent aminotransferase family. Histidinol-phosphate aminotransferase subfamily. In terms of assembly, homodimer. Pyridoxal 5'-phosphate is required as a cofactor.

It carries out the reaction L-histidinol phosphate + 2-oxoglutarate = 3-(imidazol-4-yl)-2-oxopropyl phosphate + L-glutamate. Its pathway is amino-acid biosynthesis; L-histidine biosynthesis; L-histidine from 5-phospho-alpha-D-ribose 1-diphosphate: step 7/9. The chain is Histidinol-phosphate aminotransferase from Geotalea uraniireducens (strain Rf4) (Geobacter uraniireducens).